A 126-amino-acid chain; its full sequence is Antimicrobial protein 1 (126 aa).

The signal sequence occupies residues Met-1–Ala-24.

As to expression, strongly expressed in gills, hemocytes and reproductive tract, with weaker expression in muscle, heart and digestive tract. Not detected in eyes and hepatopancreas (at protein level).

It is found in the secreted. Its function is as follows. Has antibacterial activity against the Gram-positive bacteria E.coli (MIC&lt;50 ug/ml) and P.aeruginosa (MIC&lt;25 ug/ml), and the Gram-negative bacteria S.aureus (MIC&lt;100 ug/ml) and S.pyogenes (MIC&lt;50 ug/ml). This Scylla serrata (Mud crab) protein is Antimicrobial protein 1.